A 550-amino-acid polypeptide reads, in one-letter code: Hydroxylamine reductase (550 aa).

[2Fe-2S] cluster-binding residues include cysteine 3, cysteine 6, cysteine 18, and cysteine 25. Hybrid [4Fe-2O-2S] cluster contacts are provided by histidine 249, glutamate 273, cysteine 317, cysteine 405, cysteine 433, cysteine 458, glutamate 492, and lysine 494. Position 405 is a cysteine persulfide (cysteine 405).

Belongs to the HCP family. Requires [2Fe-2S] cluster as cofactor. Hybrid [4Fe-2O-2S] cluster is required as a cofactor.

The protein localises to the cytoplasm. The catalysed reaction is A + NH4(+) + H2O = hydroxylamine + AH2 + H(+). With respect to regulation, inhibited by oxygen. Activated by cyanide except in the prolonged presence of excess cyanide, where the enzyme is inactivated. In terms of biological role, catalyzes the reduction of hydroxylamine to form NH(3) and H(2)O. Is also able to reduce hydroxylamine analogs such as methylhydroxylamine and hydroxyquinone. Might have a role as a scavenger of potentially toxic by-products of nitrate metabolism. The polypeptide is Hydroxylamine reductase (Escherichia coli (strain K12)).